The sequence spans 729 residues: Neurochondrin (729 aa).

Ser2 carries the N-acetylserine modification. Ser2 is modified (phosphoserine). 2 S-palmitoyl cysteine lipidation sites follow: Cys3 and Cys4. Arg75 carries the asymmetric dimethylarginine modification. Ser448 is subject to Phosphoserine.

Belongs to the neurochondrin family. Interacts with MCHR1. Interacts with SEMA4C. Interacts with DIAPH1 (via FH3 domain). Interacts with GRM5. In terms of processing, palmitoylated. Palmitoylation by ZDHHC1, ZDHHC3 and ZDHHC11 regulates the association of NCDN with endosome membranes. May also be palmitoylated by ZDHHC7. As to expression, expressed in the neuronal, chondral and bone tissues. Expressed in dendrites. Enriched in the brain in the surface layer I-IV. In brains, protein level increases in male but decreases in female with advancing age (at protein level). In adult brains, it is highly expressed in the forebrain and hindbrain. Highly expressed in the hippocampus, piriform cortex, septum, amygdaloid complex, medial geniculate nucleus, inferior colliculus, cerebellar nuclei and the nuclei of the Vth, VIIth, and XIIth cranial nerves. In bone tissues, it is expressed in osteoblasts and osteocytes.

The protein localises to the cytoplasm. It is found in the cytosol. The protein resides in the endosome membrane. It localises to the cell projection. Its subcellular location is the dendrite. The protein localises to the postsynapse. Probably involved in signal transduction, in the nervous system, via increasing cell surface localization of GRM5 and positively regulating its signaling. Required for the spatial learning process. Acts as a negative regulator of Ca(2+)-calmodulin-dependent protein kinase 2 (CaMK2) phosphorylation. May play a role in modulating melanin-concentrating hormone-mediated functions via its interaction with MCHR1 that interferes with G protein-coupled signal transduction. May be involved in bone metabolism. May also be involved in neurite outgrowth. The sequence is that of Neurochondrin (Ncdn) from Mus musculus (Mouse).